A 147-amino-acid polypeptide reads, in one-letter code: Hemoglobin subunit beta (147 aa).

An N-acetylvaline modification is found at V2. A Globin domain is found at 3–147 (HLSAEEKGHI…VATALAHKYH (145 aa)). K60 is subject to N6-acetyllysine. H64 lines the heme b pocket. K83 bears the N6-acetyllysine mark. H93 serves as a coordination point for heme b. Position 94 is an S-nitrosocysteine (C94). K145 is modified (N6-acetyllysine).

The protein belongs to the globin family. In terms of assembly, heterotetramer of two alpha chains and two beta chains. Red blood cells.

Functionally, involved in oxygen transport from the lung to the various peripheral tissues. The protein is Hemoglobin subunit beta (HBB) of Sminthopsis crassicaudata (Fat-tailed dunnart).